A 160-amino-acid polypeptide reads, in one-letter code: MPSFDVVSEVDKHALTNAVDQAQRLITNRFDFKGVDAKFERKEFDITITADADMQLDQMLDVLRTAMAKNGIDVSCLDISSMKTSGKQVKRDMTVRTGIDKELAKKIVALVKEKKLKVQASIQGDQVRVTGKKRDDLQECIATLRAAELGMPMQFNNFRD.

Belongs to the YajQ family.

Its function is as follows. Nucleotide-binding protein. The polypeptide is Nucleotide-binding protein CJA_2652 (Cellvibrio japonicus (strain Ueda107) (Pseudomonas fluorescens subsp. cellulosa)).